The following is a 185-amino-acid chain: ATP-dependent protease subunit HslV (185 aa).

Thr-12 is an active-site residue. The Na(+) site is built by Ala-168, Cys-171, and Thr-174.

It belongs to the peptidase T1B family. HslV subfamily. In terms of assembly, a double ring-shaped homohexamer of HslV is capped on each side by a ring-shaped HslU homohexamer. The assembly of the HslU/HslV complex is dependent on binding of ATP.

The protein localises to the cytoplasm. It carries out the reaction ATP-dependent cleavage of peptide bonds with broad specificity.. Allosterically activated by HslU binding. Its function is as follows. Protease subunit of a proteasome-like degradation complex believed to be a general protein degrading machinery. This is ATP-dependent protease subunit HslV from Cereibacter sphaeroides (strain ATCC 17025 / ATH 2.4.3) (Rhodobacter sphaeroides).